Consider the following 372-residue polypeptide: Galanin receptor type 2 (372 aa).

At 1 to 28 the chain is on the extracellular side; sequence MNGSGSQGAENTSQEGGSGGWQPEAVLV. 2 N-linked (GlcNAc...) asparagine glycosylation sites follow: asparagine 2 and asparagine 11. A helical transmembrane segment spans residues 29 to 49; the sequence is PLFFALIFLVGTVGNALVLAV. At 50-60 the chain is on the cytoplasmic side; the sequence is LLRGGQAVSTT. The helical transmembrane segment at 61–81 threads the bilayer; that stretch reads NLFILNLGVADLCFILCCVPF. At 82-99 the chain is on the extracellular side; that stretch reads QATIYTLDDWVFGSLLCK. A disulfide bond links cysteine 98 and cysteine 175. A helical transmembrane segment spans residues 100–121; sequence AVHFLIFLTMHASSFTLAAVSL. Topologically, residues 122–141 are cytoplasmic; sequence DRYLAIRYPLHSRELRTPRN. The chain crosses the membrane as a helical span at residues 142–162; that stretch reads ALAAIGLIWGLALLFSGPYLS. At 163-187 the chain is on the extracellular side; that stretch reads YYRQSQLANLTVCHPAWSAPRRRAM. Residues 188 to 208 form a helical membrane-spanning segment; it reads DLCTFVFSYLLPVLVLSLTYA. The Cytoplasmic portion of the chain corresponds to 209–237; it reads RTLRYLWRTVDPVTAGSGSQRAKRKVTRM. The chain crosses the membrane as a helical span at residues 238-258; it reads IIIVAVLFCLCWMPHHALILC. Residues 259-260 lie on the Extracellular side of the membrane; sequence VW. Residues 261-281 form a helical membrane-spanning segment; the sequence is FGRFPLTRATYALRILSHLVS. The Cytoplasmic portion of the chain corresponds to 282-372; that stretch reads YANSCVNPIV…ASSRTLDPAC (91 aa). Residues 353–372 are disordered; sequence VPPPALPNCTASSRTLDPAC. Positions 361-372 are enriched in polar residues; sequence CTASSRTLDPAC.

Belongs to the G-protein coupled receptor 1 family.

It is found in the cell membrane. Functionally, receptor for the hormone galanin, GALP and spexin-1. The activity of this receptor is mediated by G proteins that activate the phospholipase C/protein kinase C pathway (via G(q)) and that inhibit adenylyl cyclase (via G(i)). The protein is Galanin receptor type 2 (Galr2) of Rattus norvegicus (Rat).